The following is a 186-amino-acid chain: Putative CTD phosphatase-like protein 355R (186 aa).

The 181-residue stretch at 2–182 (ENNKKKLILL…TELLKVQKTL (181 aa)) folds into the FCP1 homology domain.

It belongs to the IIV-6 355R family.

May function as a phosphatase. This Aedes vexans (Inland floodwater mosquito) protein is Putative CTD phosphatase-like protein 355R.